A 615-amino-acid polypeptide reads, in one-letter code: 1-deoxy-D-xylulose-5-phosphate synthase (615 aa).

Thiamine diphosphate-binding positions include histidine 76 and 117 to 119 (GHS). Position 148 (aspartate 148) interacts with Mg(2+). Thiamine diphosphate is bound by residues 149–150 (GA), asparagine 177, tyrosine 284, and glutamate 365. Position 177 (asparagine 177) interacts with Mg(2+).

The protein belongs to the transketolase family. DXPS subfamily. As to quaternary structure, homodimer. Mg(2+) is required as a cofactor. Requires thiamine diphosphate as cofactor.

The catalysed reaction is D-glyceraldehyde 3-phosphate + pyruvate + H(+) = 1-deoxy-D-xylulose 5-phosphate + CO2. It functions in the pathway metabolic intermediate biosynthesis; 1-deoxy-D-xylulose 5-phosphate biosynthesis; 1-deoxy-D-xylulose 5-phosphate from D-glyceraldehyde 3-phosphate and pyruvate: step 1/1. Its function is as follows. Catalyzes the acyloin condensation reaction between C atoms 2 and 3 of pyruvate and glyceraldehyde 3-phosphate to yield 1-deoxy-D-xylulose-5-phosphate (DXP). In Francisella tularensis subsp. tularensis (strain FSC 198), this protein is 1-deoxy-D-xylulose-5-phosphate synthase.